The following is a 230-amino-acid chain: dITP/XTP pyrophosphatase (230 aa).

7–12 (STNPGK) serves as a coordination point for substrate. Mg(2+) contacts are provided by E41 and D70. D70 (proton acceptor) is an active-site residue. Residues S71, 181–184 (FGYD), K205, and 210–211 (HR) each bind substrate.

The protein belongs to the HAM1 NTPase family. Homodimer. The cofactor is Mg(2+).

The catalysed reaction is XTP + H2O = XMP + diphosphate + H(+). It catalyses the reaction dITP + H2O = dIMP + diphosphate + H(+). The enzyme catalyses ITP + H2O = IMP + diphosphate + H(+). Pyrophosphatase that catalyzes the hydrolysis of nucleoside triphosphates to their monophosphate derivatives, with a high preference for the non-canonical purine nucleotides XTP (xanthosine triphosphate), dITP (deoxyinosine triphosphate) and ITP. Seems to function as a house-cleaning enzyme that removes non-canonical purine nucleotides from the nucleotide pool, thus preventing their incorporation into DNA/RNA and avoiding chromosomal lesions. This chain is dITP/XTP pyrophosphatase, found in Anaeromyxobacter sp. (strain Fw109-5).